Here is a 629-residue protein sequence, read N- to C-terminus: DNA topoisomerase 4 subunit B (629 aa).

ATP contacts are provided by residues tyrosine 4, asparagine 41, aspartate 68, 109–115 (GLHGVGI), and lysine 333. Residues 411-524 (AELFLVEGDS…AGHVYVAMPP (114 aa)) form the Toprim domain. Glutamate 417, aspartate 489, and aspartate 491 together coordinate Mg(2+).

Belongs to the type II topoisomerase family. ParE type 1 subfamily. In terms of assembly, heterotetramer composed of ParC and ParE. Mg(2+) serves as cofactor. It depends on Mn(2+) as a cofactor. The cofactor is Ca(2+).

It catalyses the reaction ATP-dependent breakage, passage and rejoining of double-stranded DNA.. Topoisomerase IV is essential for chromosome segregation. It relaxes supercoiled DNA. Performs the decatenation events required during the replication of a circular DNA molecule. The chain is DNA topoisomerase 4 subunit B from Pseudomonas aeruginosa (strain ATCC 15692 / DSM 22644 / CIP 104116 / JCM 14847 / LMG 12228 / 1C / PRS 101 / PAO1).